The primary structure comprises 115 residues: Large ribosomal subunit protein uL24 (115 aa).

It belongs to the universal ribosomal protein uL24 family. Part of the 50S ribosomal subunit.

Functionally, one of two assembly initiator proteins, it binds directly to the 5'-end of the 23S rRNA, where it nucleates assembly of the 50S subunit. One of the proteins that surrounds the polypeptide exit tunnel on the outside of the subunit. This chain is Large ribosomal subunit protein uL24, found in Deinococcus geothermalis (strain DSM 11300 / CIP 105573 / AG-3a).